The primary structure comprises 395 residues: MVQSLHEFLEENINYLKENGLYNEIDTIEGANGPEIKINGKSYINLSSNNYLGLATNEDLKSAAKAAIDTHGVGAGAVRTINGTLDLHDELEETLAKFKGTEAAIAYQSGFNCNMAAISAVMNKNDAILSDELNHASIIDGCRLSKAKIIRVNHSDMDDLRAKAKEAVESGQYNKVMYITDGVFSMDGDVAKLPEIVEIAEEFGLLTYVDDAHGSGVMGKGAGTVKHFGLQDKIDFQIGTLSKAIGVVGGYVAGTKELIDWLKAQSRPFLFSTSLAPGDTKAITEAVKKLMDSTELHDKLWNNAQYLKNGLSKLGYDTGESETPITPVIIGDEKTTQEFSKRLKDEGVYVKSIVFPTVPRGTGRVRNMPTAAHTKDMLDEAIAAYEKVGKEMKLI.

Residue 110–111 (GF) participates in pyridoxal 5'-phosphate binding. Histidine 135 lines the substrate pocket. Pyridoxal 5'-phosphate contacts are provided by residues serine 185, 210 to 213 (DDAH), and 240 to 243 (TLSK). At lysine 243 the chain carries N6-(pyridoxal phosphate)lysine. Threonine 357 lines the substrate pocket.

Belongs to the class-II pyridoxal-phosphate-dependent aminotransferase family. In terms of assembly, homodimer. Pyridoxal 5'-phosphate serves as cofactor.

This Staphylococcus aureus (strain COL) protein is Putative pyridoxal phosphate-dependent acyltransferase.